The following is a 628-amino-acid chain: Biosynthetic arginine decarboxylase (628 aa).

An N6-(pyridoxal phosphate)lysine modification is found at K99. 279 to 289 (VDVGGGLGIDY) lines the substrate pocket.

It belongs to the Orn/Lys/Arg decarboxylase class-II family. SpeA subfamily. The cofactor is Mg(2+). Pyridoxal 5'-phosphate serves as cofactor.

It carries out the reaction L-arginine + H(+) = agmatine + CO2. Functionally, catalyzes the biosynthesis of agmatine from arginine. The sequence is that of Biosynthetic arginine decarboxylase from Xanthomonas campestris pv. campestris (strain ATCC 33913 / DSM 3586 / NCPPB 528 / LMG 568 / P 25).